Reading from the N-terminus, the 1177-residue chain is DNA-directed RNA polymerase subunit beta (1177 aa).

Residues 1147 to 1161 (DDTEIEMRDTEDDDD) are compositionally biased toward acidic residues. A disordered region spans residues 1147–1177 (DDTEIEMRDTEDDDDHQSADKLNVEVETTKE). Residues 1162–1177 (HQSADKLNVEVETTKE) show a composition bias toward basic and acidic residues.

Belongs to the RNA polymerase beta chain family. The RNAP catalytic core consists of 2 alpha, 1 beta, 1 beta' and 1 omega subunit. When a sigma factor is associated with the core the holoenzyme is formed, which can initiate transcription.

The catalysed reaction is RNA(n) + a ribonucleoside 5'-triphosphate = RNA(n+1) + diphosphate. DNA-dependent RNA polymerase catalyzes the transcription of DNA into RNA using the four ribonucleoside triphosphates as substrates. The sequence is that of DNA-directed RNA polymerase subunit beta from Bacillus cereus (strain G9842).